We begin with the raw amino-acid sequence, 169 residues long: Large ribosomal subunit protein uL10 (169 aa).

It belongs to the universal ribosomal protein uL10 family. In terms of assembly, part of the ribosomal stalk of the 50S ribosomal subunit. The N-terminus interacts with L11 and the large rRNA to form the base of the stalk. The C-terminus forms an elongated spine to which L12 dimers bind in a sequential fashion forming a multimeric L10(L12)X complex.

Functionally, forms part of the ribosomal stalk, playing a central role in the interaction of the ribosome with GTP-bound translation factors. The polypeptide is Large ribosomal subunit protein uL10 (Onion yellows phytoplasma (strain OY-M)).